The primary structure comprises 373 residues: SWI/SNF-related matrix-associated actin-dependent regulator of chromatin subfamily B member 1-A (373 aa).

The interval 1-101 (MALSKTYGQK…DEKYKAVSIS (101 aa)) is DNA-binding.

This sequence belongs to the SNF5 family. In terms of assembly, component of the multiprotein chromatin-remodeling complexes SWI/SNF. Component of neural progenitors-specific chromatin remodeling complex (npBAF complex) and the neuron-specific chromatin remodeling complex (nBAF complex). Component of the BAF (SWI/SNF) chromatin remodeling complex. Component of the SWI/SNF-B (PBAF) chromatin remodeling complex. Binds to double-stranded DNA.

Its subcellular location is the nucleus. Functionally, involved in chromatin-remodeling. Core component of the BAF (SWI/SNF) complex. This ATP-dependent chromatin-remodeling complex plays important roles in cell proliferation and differentiation, in cellular antiviral activities and inhibition of tumor formation. Belongs to the neural progenitors-specific chromatin remodeling complex (npBAF complex) and the neuron-specific chromatin remodeling complex (nBAF complex) and may play a role in neural development. The polypeptide is SWI/SNF-related matrix-associated actin-dependent regulator of chromatin subfamily B member 1-A (smarcb1a) (Danio rerio (Zebrafish)).